The chain runs to 692 residues: Small conductance calcium-activated potassium channel-like protein 3 (692 aa).

A helical transmembrane segment spans residues 270 to 290; that stretch reads SLYLALFGVILMLVESEITAE. A helical membrane pass occupies residues 313–333; the sequence is TIALLYHIILYHLNDIVLELV. A helical transmembrane segment spans residues 349–369; sequence VIQFCIEFICCGICPLPGSGE. A helical membrane pass occupies residues 401 to 421; the sequence is VILSCFMLCRSYLFARFMVLH. Residues 455–475 form a helical membrane-spanning segment; that stretch reads PVLFLTTFTFIFWIIMSWMFV. Residues 492-512 constitute an intramembrane region (pore-forming); it reads YSNSLWFIAITFMLNGYGDIV. The helical transmembrane segment at 520–540 threads the bilayer; it reads FIAIFVGVVGAVISSILIAVI. Residues 667-683 are compositionally biased toward polar residues; it reads HSTPNVPHLQGLTSSPV. A disordered region spans residues 667–692; it reads HSTPNVPHLQGLTSSPVPSDRYDNRF.

This sequence belongs to the potassium channel KCNN family. SK subfamily. As to quaternary structure, heterooligomer.

The protein localises to the membrane. Forms a voltage-independent potassium channel activated by intracellular calcium. The chain is Small conductance calcium-activated potassium channel-like protein 3 (kcnl-3) from Caenorhabditis elegans.